The following is a 289-amino-acid chain: D-alanine aminotransferase (289 aa).

Y31 lines the substrate pocket. R50 serves as a coordination point for pyridoxal 5'-phosphate. Positions 99 and 101 each coordinate substrate. N6-(pyridoxal phosphate)lysine is present on K147. E179 is a binding site for pyridoxal 5'-phosphate.

Belongs to the class-IV pyridoxal-phosphate-dependent aminotransferase family. In terms of assembly, homodimer. Pyridoxal 5'-phosphate is required as a cofactor.

The catalysed reaction is D-alanine + 2-oxoglutarate = D-glutamate + pyruvate. Functionally, acts on the D-isomers of alanine, leucine, aspartate, glutamate, aminobutyrate, norvaline and asparagine. The enzyme transfers an amino group from a substrate D-amino acid to the pyridoxal phosphate cofactor to form pyridoxamine and an alpha-keto acid in the first half-reaction. The second half-reaction is the reverse of the first, transferring the amino group from the pyridoxamine to a second alpha-keto acid to form the product D-amino acid via a ping-pong mechanism. This is an important process in the formation of D-alanine and D-glutamate, which are essential bacterial cell wall components. This chain is D-alanine aminotransferase (dat), found in Listeria monocytogenes serovar 1/2a (strain ATCC BAA-679 / EGD-e).